Consider the following 709-residue polypeptide: U3 small nucleolar RNA-associated protein 25 (709 aa).

The tract at residues 1–156 (MVKRTGNGTD…DERDPFESHF (156 aa)) is disordered. Residues 22–36 (DLRSIRRARNDKEPV) show a composition bias toward basic and acidic residues. Acidic residues predominate over residues 37 to 66 (EEPEIPVASEEDGELSEDSEEDATNEVQEQ). Over residues 82 to 91 (KSEHPEDRQR) the composition is skewed to basic and acidic residues. 2 stretches are compositionally biased toward acidic residues: residues 105 to 116 (SSDDELSEDEKG) and 126 to 150 (PGEE…DERD).

This sequence belongs to the UTP25 family. As to quaternary structure, component of the ribosomal small subunit (SSU) processome composed of at least 40 protein subunits and snoRNA U3.

Its subcellular location is the nucleus. The protein resides in the nucleolus. DEAD-box RNA helicase-like protein required for pre-18S rRNA processing, specifically at sites A0, A1, and A2. In Zygosaccharomyces rouxii (strain ATCC 2623 / CBS 732 / NBRC 1130 / NCYC 568 / NRRL Y-229), this protein is U3 small nucleolar RNA-associated protein 25 (UTP25).